The chain runs to 1387 residues: Dicer-like protein 2-1 (1387 aa).

One can recognise a Helicase ATP-binding domain in the interval 26–205 (MFEASLKENI…LLKIESNLDA (180 aa)). 39–46 (MGTGSGKT) contributes to the ATP binding site. Positions 146-149 (DEAH) match the DEAH box motif. The Helicase C-terminal domain maps to 370 to 535 (KFRSLLEFLD…AYEDDERRLR (166 aa)). Residues 565 to 659 (AVAHLNHFCA…LPFKRNLELK (95 aa)) form the Dicer dsRNA-binding fold domain. 2 consecutive RNase III domains span residues 915–1055 (ATRL…IDGG) and 1094–1277 (DDHL…IDSH). The Mg(2+) site is built by glutamate 1133, aspartate 1263, and glutamate 1266.

Belongs to the helicase family. Dicer subfamily. The cofactor is Mg(2+). Mn(2+) serves as cofactor.

In terms of biological role, dicer-like endonuclease involved in cleaving double-stranded RNA in the RNA interference (RNAi) pathway. Produces 21 to 25 bp dsRNAs (siRNAs) which target the selective destruction of homologous RNAs leading to sequence-specific suppression of gene expression, called post-transcriptional gene silencing (PTGS). Part of a broad host defense response against viral infection and transposons. The chain is Dicer-like protein 2-1 (dcl2-1) from Aspergillus niger (strain ATCC MYA-4892 / CBS 513.88 / FGSC A1513).